The chain runs to 434 residues: MLKLSSSQPDFAERLKALLAFETAQDPAVDAAVASICADVHHRGDAALVEHTNRFDRMQAAGMADLTLSREQLEAAWLRLPADVRDALSAAAERVRRYHEKQLAHSWSYEDEDGTLLGQQVTPLDRVGIYVPGGKAAYPSSVLMNALPAKVAGVGEIIMVVPTPGGERNDLVLAAAYIAGVDKVFTVGGAQAVAALAYGTETVPQVDKITGPGNAYVAAAKRRVFGVVGIDMVAGPSEILVICDGATDPDWVAMDLFSQAEHDEIAQAILLCPSADYIAQVEASIAKLLPSMPRRAIIEASLAGRGALIQVSDLAEACEISNYIAPEHLELSVADPDALLPQLRHAGAIFMGRFTSESLGDYCAGPNHVLPTSRTARFASPLGVYDFQKRSSLIRVSQAGAQKLGRIASLLAHGEGLTAHARAAELRLEDGTPR.

Positions 130, 191, and 214 each coordinate NAD(+). Positions 237, 259, and 262 each coordinate substrate. The Zn(2+) site is built by Gln259 and His262. Active-site proton acceptor residues include Glu327 and His328. Substrate contacts are provided by His328, Asp361, Glu415, and His420. Residue Asp361 participates in Zn(2+) binding. His420 provides a ligand contact to Zn(2+).

Belongs to the histidinol dehydrogenase family. Zn(2+) serves as cofactor.

It catalyses the reaction L-histidinol + 2 NAD(+) + H2O = L-histidine + 2 NADH + 3 H(+). It functions in the pathway amino-acid biosynthesis; L-histidine biosynthesis; L-histidine from 5-phospho-alpha-D-ribose 1-diphosphate: step 9/9. Functionally, catalyzes the sequential NAD-dependent oxidations of L-histidinol to L-histidinaldehyde and then to L-histidine. This Chromobacterium violaceum (strain ATCC 12472 / DSM 30191 / JCM 1249 / CCUG 213 / NBRC 12614 / NCIMB 9131 / NCTC 9757 / MK) protein is Histidinol dehydrogenase.